The primary structure comprises 173 residues: Small ribosomal subunit protein uS13 (173 aa).

Over residues 130–143 (GVRHKRGQKVRGQR) the composition is skewed to basic residues. Positions 130 to 155 (GVRHKRGQKVRGQRTKSTGRTEGTIG) are disordered.

The protein belongs to the universal ribosomal protein uS13 family. As to quaternary structure, part of the 30S ribosomal subunit. Forms a loose heterodimer with protein S19. Forms two bridges to the 50S subunit in the 70S ribosome.

Its function is as follows. Located at the top of the head of the 30S subunit, it contacts several helices of the 16S rRNA. In the 70S ribosome it contacts the 23S rRNA (bridge B1a) and protein L5 of the 50S subunit (bridge B1b), connecting the 2 subunits; these bridges are implicated in subunit movement. The polypeptide is Small ribosomal subunit protein uS13 (Haloquadratum walsbyi (strain DSM 16790 / HBSQ001)).